The primary structure comprises 424 residues: MPLLWLRGFLLASCWIIVRSSPTPGSEGHGAAPDCPSCALATLPKDGPNSQPEMVEAVKKHILNMLHLKKRPDVTQPVPKAALLNAIRKLHVGKVGENGYVEIEDDIGRRAEMNELMEQTSEIITFAESGTARKTLHFEISKEGSDLSVVERAEVWLFLKVPKANRTRTKVTIRLFQQQKHPQGSLDMGDEAEEMGLKGERSELLLSEKVVDARKSTWHIFPVSSSIQRLLDQGKSSLDVRIACEQCQESGASLVLLGKKKKKEVDGDGKKKDGSDGGLEEEKEQSHRPFLMLQARQSEDHPHRRRRRGLECDGKVNICCKKQFFVSFKDIGWNDWIIAPSGYHANYCEGECPSHIAGTSGSSLSFHSTVINHYRMRGHSPFANLKSCCVPTKLRPMSMLYYDDGQNIIKKDIQNMIVEECGCS.

Residues methionine 1–serine 20 form the signal peptide. Positions serine 21–arginine 308 are excised as a propeptide. N-linked (GlcNAc...) asparagine glycosylation is present at asparagine 165. Basic and acidic residues predominate over residues glutamate 264–serine 275. The disordered stretch occupies residues glutamate 264–arginine 306. Intrachain disulfides connect cysteine 312–cysteine 320, cysteine 319–cysteine 389, cysteine 348–cysteine 421, and cysteine 352–cysteine 423.

Belongs to the TGF-beta family. Dimeric, linked by one or more disulfide bonds. Inhibin A is a dimer of alpha/INHA and beta-A/INHBA. Activin A is a homodimer of beta-A/INHBA. Activin AB is a dimer of beta-A/INHBA and beta-B/INHBB. Interacts with FST and FSTL3; these interactions prevent activin A interaction to its type II receptor. Activin A interacts with ACVR2A. Activin A interacts with BMPR2. Inhibin A interacts with ACVR1; this interaction creates a non-signaling complex (NSC) that inhibits ACVR1-mediated BMP signaling. Inhibin A interacts with ACVR2A.

The protein localises to the secreted. Functionally, inhibins/activins are involved in regulating a number of diverse functions such as hypothalamic and pituitary hormone secretion, gonadal hormone secretion, germ cell development and maturation, erythroid differentiation, insulin secretion, nerve cell survival, embryonic axial development or bone growth, depending on their subunit composition. Its function is as follows. Activin A is a homodimer of INHBA that plays a role in several essential biological processes including embryonic development, stem cell maintenance and differentiation, haematopoiesis, cell proliferation and tissue fibrosis. Signals through type I (such as ACVR1B or ACVR1C) and type II receptors (such as ACVR2A, ACVR2B or BMPR2) which, upon ligand binding, phosphorylate SMAD2 and SMAD3 intracellular signaling mediators that form a complex with SMAD4, translocate to the nucleus and modulate gene expression. Can also activate alternative non-canonical intracellular signaling pathways including the p38 MAPK, extracellular signal-regulated kinases 1/2 (ERK1/2) and c-Jun N-terminal kinases (JNKs) to modulate cell migration and differentiation. Alternatively, promotes osteoblastic differentiation via ACVRL1-SMAD1/5/9 pathway. In addition, can engage the type I receptor ACVR1 to form an ACVR1-activin A-type II receptor non-signaling complex (NSC) that renders receptors unavailable for engagement with BMPs, hence resulting in an apparent inhibition of ACVR1-mediated BMP signaling. Inhibin A is a dimer of alpha/INHA and beta-A/INHBA that functions as a feedback regulator in the hypothalamic-pituitary-gonadal (HPG) axis. Inhibits the secretion of FSH from the anterior pituitary gland by acting on pituitary gonadotrope cells. Antagonizes activin A by binding to the proteoglycan, betaglycan, and forming a stable complex with and, thereby, sequestering type II activin receptors while excluding type I receptor. The sequence is that of Inhibin beta A chain (Inhba) from Rattus norvegicus (Rat).